Here is a 453-residue protein sequence, read N- to C-terminus: MGVKTFTHSSSSHSQEMLGKLNMLRNDGHFCDITIRVQDRIFRAHKVVLAACSDFFRTKLVGQTEDENKNVLDLHHVTVTGFIPLLEYAYTATLSINTENIIDVLAAASYMQMFSVASTCSEFMKSSILWNTPNSQPEKGLDAGQENSSNCNFTSRDGSISPVSSECSAVERTIPVCRESRRKRKSYIVMSPESPVKCSTQTNSPQVLNSSASYAENRNQPVDSSLAFPWTFPFGIDRRIQPEKAKQAENTRTLELPGPSEAGRRMADYVTCESTKTTLPLGTEEDVRVKVERLSDEEVHEEVSQPVSASQSSLSDQQTVPGSEPVQEDLLISPQSSSIGSVDEGVTEGLPTLQSTSSTNAHADEDDRLENVQYPYQLYIAPSTSSTERPSPNGPDRPFQCPTCGVRFTRIQNLKQHMLIHSGIKPFQCDCCGKKFTRAYSLKMHRLKHEVIS.

Residue K4 forms a Glycyl lysine isopeptide (Lys-Gly) (interchain with G-Cter in SUMO2) linkage. Residues 31–98 (CDITIRVQDR…AYTATLSINT (68 aa)) enclose the BTB domain. Phosphoserine occurs at positions 135, 159, 161, 165, 191, 194, and 199. T200 carries the phosphothreonine modification. The tract at residues 241–265 (QPEKAKQAENTRTLELPGPSEAGRR) is disordered. Residue K290 forms a Glycyl lysine isopeptide (Lys-Gly) (interchain with G-Cter in SUMO2) linkage. Disordered regions lie at residues 295 to 324 (SDEE…PGSE) and 336 to 368 (SSSI…EDDR). Residues 304 to 318 (SQPVSASQSSLSDQQ) show a composition bias toward low complexity. Residues 352-361 (TLQSTSSTNA) show a composition bias toward polar residues. 2 consecutive C2H2-type zinc fingers follow at residues 399–421 (FQCP…MLIH) and 427–449 (FQCD…RLKH).

Its subcellular location is the nucleus. The sequence is that of Zinc finger and BTB domain-containing protein 44 (Zbtb44) from Rattus norvegicus (Rat).